Reading from the N-terminus, the 61-residue chain is Potassium channel toxin alpha-KTx 3.18 (61 aa).

Residues 1–23 (MKMFFTVLVTLFVCSMIIGICEG) form the signal peptide. Cystine bridges form between Cys30-Cys50, Cys36-Cys55, and Cys40-Cys57. Lys60 carries the lysine amide modification.

Expressed by the venom gland.

The protein resides in the secreted. Its function is as follows. Inhibits voltage-gated potassium channel rKv1.1/KCNA1 at nanomolar ranges (IC(50)=90 +-2 nM, reduction of current by 30% at 50 nM or toxin). The chain is Potassium channel toxin alpha-KTx 3.18 from Mesobuthus eupeus (Lesser Asian scorpion).